A 395-amino-acid chain; its full sequence is MHC class I-like protein MILL1 (395 aa).

Positions 1–32 (MLLSRNLRALAAIHLWIVYLLLEDLLGTCAEG) are cleaved as a signal peptide. Residues 57 to 148 (AVAEPHTLRY…ITAQNGQNTD (92 aa)) are alpha-1. N98, N163, and N199 each carry an N-linked (GlcNAc...) asparagine glycan. Residues 149–240 (LHILQATFGC…SLRNGLLNTG (92 aa)) form an alpha-2 region. 2 disulfides stabilise this stretch: C158–C221 and C260–C317. The segment at 241–337 (FPKVIVTFRN…EPAATEAPVY (97 aa)) is alpha-3. The 92-residue stretch at 242–333 (PKVIVTFRNY…HNINEPAATE (92 aa)) folds into the Ig-like C1-type domain. Residues 332–352 (TEAPVYGARREQPPTSGVGSR) are disordered. Residues 338–368 (GARREQPPTSGVGSRVGKSLWSAMTTALVVI) are connecting peptide. A lipid anchor (GPI-anchor amidated serine) is attached at S369. A propeptide spans 370–395 (WTLSQKLMGPLLWFCSGGFCSFLQCW) (removed in mature form).

It belongs to the MHC class I family. Heterodimer with B2M. Post-translationally, N-glycosylated. As to expression, expressed in stomach, intestine, uterus, skeletal muscle and heart.

The protein localises to the cell membrane. This chain is MHC class I-like protein MILL1, found in Mus musculus (Mouse).